The following is a 296-amino-acid chain: Methylsterol monooxygenase 1 (296 aa).

2 helical membrane passes run 55–75 (LLVH…FQFI) and 100–120 (TLIF…YYFT). Positions 145–274 (CAVIEDAWHY…FTWWDRIFGT (130 aa)) constitute a Fatty acid hydroxylase domain. The Histidine box-1 motif lies at 157 to 161 (HRLLH). The Histidine box-2 motif lies at 170–174 (HKVHH). Residues 199–219 (FFIGIVVFCNHVVLLWAWVIC) traverse the membrane as a helical segment. Positions 249-255 (FHDFHHM) match the Histidine box-3 motif.

It belongs to the sterol desaturase family. Fe cation is required as a cofactor.

It localises to the endoplasmic reticulum membrane. The enzyme catalyses 4,4-dimethyl-5alpha-cholest-7-en-3beta-ol + 6 Fe(II)-[cytochrome b5] + 3 O2 + 5 H(+) = 4alpha-carboxy-4beta-methyl-5alpha-cholest-7-ene-3beta-ol + 6 Fe(III)-[cytochrome b5] + 4 H2O. The protein operates within steroid biosynthesis; zymosterol biosynthesis; zymosterol from lanosterol: step 3/6. Its function is as follows. Catalyzes the first step in the removal of the two C-4 methyl groups of 4,4-dimethylzymosterol. The polypeptide is Methylsterol monooxygenase 1 (MSMO1) (Gallus gallus (Chicken)).